The chain runs to 154 residues: Transcriptional repressor NrdR (154 aa).

A zinc finger lies at 3-34 (CPFCGHSNTQVLDTRMSEDGDAVRRRRRCEAC). Residues 49–139 (PAIVKKNGSR…VYRSFEDVAE (91 aa)) enclose the ATP-cone domain.

It belongs to the NrdR family. Requires Zn(2+) as cofactor.

Negatively regulates transcription of bacterial ribonucleotide reductase nrd genes and operons by binding to NrdR-boxes. In Cupriavidus pinatubonensis (strain JMP 134 / LMG 1197) (Cupriavidus necator (strain JMP 134)), this protein is Transcriptional repressor NrdR.